Here is a 388-residue protein sequence, read N- to C-terminus: Alanine racemase, catabolic (388 aa).

K46 serves as the catalytic Proton acceptor; specific for D-alanine. Residue K46 is modified to N6-(pyridoxal phosphate)lysine. R145 lines the substrate pocket. Y267 functions as the Proton acceptor; specific for L-alanine in the catalytic mechanism. Substrate is bound at residue M315.

The protein belongs to the alanine racemase family. The cofactor is pyridoxal 5'-phosphate.

The enzyme catalyses L-alanine = D-alanine. Functionally, isomerizes L-alanine to D-alanine which is then oxidized to pyruvate by DadA. The chain is Alanine racemase, catabolic (dadB) from Agrobacterium fabrum (strain C58 / ATCC 33970) (Agrobacterium tumefaciens (strain C58)).